We begin with the raw amino-acid sequence, 495 residues long: Sialin (495 aa).

Positions 1–24 (MKSPVSDLAPSDGEEGSDRTPLLQ) are disordered. Residue Ser3 is modified to Phosphoserine. The Dileucine internalization motif motif lies at 22–23 (LL). The chain crosses the membrane as a helical span at residues 42–62 (LAFLSFFGFFVLYSLRVNLSV). Asn71, Asn77, and Asn95 each carry an N-linked (GlcNAc...) asparagine glycan. 11 helical membrane passes run 110–130 (WILG…GYVA), 137–157 (LLLG…PLAA), 159–179 (FGVG…GVTY), 201–221 (ISYA…GVIC), 228–248 (YVFY…ICLV), 289–309 (LPLW…YTLL), 329–349 (FLSA…GQAA), 366–386 (VFSL…GFIG), 392–412 (AVAF…GFSI), 424–444 (ILLG…PIIA), and 458–478 (TVFC…TLFA).

It belongs to the major facilitator superfamily. Sodium/anion cotransporter family. As to expression, significantly expressed in lung endothelial cells, and much less in liver.

The protein resides in the basolateral cell membrane. It localises to the cytoplasmic vesicle. The protein localises to the secretory vesicle. It is found in the synaptic vesicle membrane. Its subcellular location is the lysosome membrane. The catalysed reaction is N-acetylneuraminate(in) + H(+)(in) = N-acetylneuraminate(out) + H(+)(out). It catalyses the reaction D-glucuronate(out) + H(+)(out) = D-glucuronate(in) + H(+)(in). The enzyme catalyses 2 nitrate(out) + H(+)(out) = 2 nitrate(in) + H(+)(in). It carries out the reaction L-aspartate(out) = L-aspartate(in). The catalysed reaction is L-glutamate(out) = L-glutamate(in). It catalyses the reaction N-acetyl-L-aspartyl-L-glutamate(out) = N-acetyl-L-aspartyl-L-glutamate(in). Multifunctional anion transporter that operates via two distinct transport mechanisms, namely proton-coupled anion cotransport and membrane potential-dependent anion transport. Electroneutral proton-coupled acidic monosaccharide symporter, with a sugar to proton stoichiometry of 1:1. Exports glucuronic acid and free sialic acid derived from sialoglycoconjugate degradation out of lysosomes, driven by outwardly directed lysosomal pH gradient. May regulate lysosome function and metabolism of sialylated conjugates that impact oligodendrocyte lineage differentiation and myelinogenesis in the central nervous system. Electrogenic proton-coupled nitrate symporter that transports nitrate ions across the basolateral membrane of salivary gland acinar cells, with nitrate to proton stoichiometry of 2:1. May contribute to nitrate clearance from serum by salivary glands, where it is further concentrated and secreted in the saliva. Uses membrane potential to drive the uptake of acidic amino acids and peptides into synaptic vesicles. Responsible for synaptic vesicular storage of L-aspartate and L-glutamate in pinealocytes as well as vesicular uptake of N-acetyl-L-aspartyl-L-glutamate neuropeptide, relevant to aspartegic-associated glutamatergic neurotransmission and activation of metabotropic receptors that inhibit subsequent transmitter release. In terms of biological role, receptor for CM101, a polysaccharide produced by group B Streptococcus with antipathoangiogenic properties. The sequence is that of Sialin (SLC17A5) from Ovis aries (Sheep).